A 349-amino-acid polypeptide reads, in one-letter code: Biotin synthase (349 aa).

Positions 60–287 (GDVELATLLS…KARVRLSAGR (228 aa)) constitute a Radical SAM core domain. [4Fe-4S] cluster is bound by residues Cys-75, Cys-79, and Cys-82. [2Fe-2S] cluster-binding residues include Cys-119, Cys-150, Cys-210, and Arg-282.

This sequence belongs to the radical SAM superfamily. Biotin synthase family. As to quaternary structure, homodimer. It depends on [4Fe-4S] cluster as a cofactor. [2Fe-2S] cluster serves as cofactor.

It carries out the reaction (4R,5S)-dethiobiotin + (sulfur carrier)-SH + 2 reduced [2Fe-2S]-[ferredoxin] + 2 S-adenosyl-L-methionine = (sulfur carrier)-H + biotin + 2 5'-deoxyadenosine + 2 L-methionine + 2 oxidized [2Fe-2S]-[ferredoxin]. The protein operates within cofactor biosynthesis; biotin biosynthesis; biotin from 7,8-diaminononanoate: step 2/2. Catalyzes the conversion of dethiobiotin (DTB) to biotin by the insertion of a sulfur atom into dethiobiotin via a radical-based mechanism. The sequence is that of Biotin synthase from Albidiferax ferrireducens (strain ATCC BAA-621 / DSM 15236 / T118) (Rhodoferax ferrireducens).